The primary structure comprises 2311 residues: Proto-oncogene tyrosine-protein kinase ROS (2311 aa).

An N-terminal signal peptide occupies residues 1–24 (MRNACLLLNRLGAFYFIWISAAYC). Topologically, residues 25–1873 (SFSKNCQDLC…LAKDTVTSPD (1849 aa)) are extracellular. N-linked (GlcNAc...) asparagine glycans are attached at residues Asn-49, Asn-65, Asn-77, Asn-123, Asn-132, Asn-265, Asn-287, Asn-307, Asn-333, Asn-377, Asn-405, Asn-480, Asn-607, Asn-628, Asn-706, Asn-714, Asn-911, Asn-940, Asn-962, Asn-971, Asn-1110, Asn-1154, Asn-1180, Asn-1233, Asn-1255, Asn-1282, Asn-1316, Asn-1470, Asn-1509, Asn-1588, Asn-1628, Asn-1682, Asn-1696, and Asn-1730. 2 consecutive Fibronectin type-III domains span residues 110 to 202 (KPGA…ASGV) and 203 to 294 (PTTA…PESK). One can recognise a Fibronectin type-III 3 domain in the interval 571 to 671 (LPTLPRLVTV…EPFRGMTFEE (101 aa)). Fibronectin type-III domains follow at residues 952-1047 (VPES…APEG) and 1051-1158 (APAN…SSDI). Fibronectin type-III domains lie at 1459–1569 (DTEK…TLYG), 1570–1669 (VPEG…AKTF), 1671–1766 (TPLS…TTAG), and 1767–1868 (VPSK…AKDT). The span at 1754 to 1764 (STSSPTSFKTT) shows a compositional bias: low complexity. The segment at 1754-1786 (STSSPTSFKTTAGVPSKPGTPKRAEDSKNSVQW) is disordered. A compositionally biased stretch (basic and acidic residues) spans 1775–1786 (KRAEDSKNSVQW). Asn-1792, Asn-1795, and Asn-1822 each carry an N-linked (GlcNAc...) asparagine glycan. A helical membrane pass occupies residues 1874 to 1898 (ITAIVAVIGAVVLGLTIIILFGFVW). Over 1899 to 2311 (HQRWKSRKPA…SISSAELTSV (413 aa)) the chain is Cytoplasmic. Residues 1961 to 2240 (LNLHKLLGSG…KLQEIRHSPL (280 aa)) enclose the Protein kinase domain. Residues 1967–1975 (LGSGAFGEV) and Lys-1996 each bind ATP. Asp-2095 (proton acceptor) is an active-site residue. Tyr-2131 is modified (phosphotyrosine; by autocatalysis).

The protein belongs to the protein kinase superfamily. Tyr protein kinase family. Insulin receptor subfamily. In terms of assembly, interacts with VAV3; constitutive interaction mediating VAV3 phosphorylation. Highest expression in kidney. Also expressed in gonad, thymus, bursa, brain and kidney.

Its subcellular location is the cell membrane. It catalyses the reaction L-tyrosyl-[protein] + ATP = O-phospho-L-tyrosyl-[protein] + ADP + H(+). Orphan receptor tyrosine kinase (RTK) that may activate several downstream signaling pathways related to cell differentiation, proliferation, growth and survival including the PI3 kinase-mTOR signaling pathway. Mediates the phosphorylation of PTPN11, an activator of this pathway. May also phosphorylate and activate the transcription factor STAT3 to control anchorage-independent cell growth. Mediates the phosphorylation and the activation of VAV3, a guanine nucleotide exchange factor regulating cell morphology. May activate other downstream signaling proteins including AKT1, MAPK1, MAPK3, IRS1, and PLCG2. This chain is Proto-oncogene tyrosine-protein kinase ROS (ROS1), found in Gallus gallus (Chicken).